We begin with the raw amino-acid sequence, 320 residues long: MRSAQVYRWQIPMDAGVVLRDRRLKTRDGLYVCLREGEREGWGEISPLPGFSQETWEEAQSVLLAWVNNWLAGDCELPQMPSVAFGVSCALAELADTLPQAANYRTAPLCNGDPDDLILKLADMPGEKVAKVKVGLYEAVRDGMVVNLLLEAIPDLHLRLDANRAWTPLKGQQFAKYVNPDYRHRIAFLEEPCKTRDDSRAFARETGIAIAWDESLREPDFAFVAEEGVRAVVIKPTLTGSLEKVREQVQAAHALGLTAVISSSIESSLGLTQLARIAAWLTPDTIPGLDTLDLMQAQQVRRWPGSTLPVVEVDALERLL.

Catalysis depends on Lys133, which acts as the Proton donor. Residues Asp161, Glu190, and Asp213 each coordinate Mg(2+). Lys235 functions as the Proton acceptor in the catalytic mechanism.

The protein belongs to the mandelate racemase/muconate lactonizing enzyme family. MenC type 1 subfamily. It depends on a divalent metal cation as a cofactor.

The enzyme catalyses (1R,6R)-6-hydroxy-2-succinyl-cyclohexa-2,4-diene-1-carboxylate = 2-succinylbenzoate + H2O. It participates in quinol/quinone metabolism; 1,4-dihydroxy-2-naphthoate biosynthesis; 1,4-dihydroxy-2-naphthoate from chorismate: step 4/7. Its pathway is quinol/quinone metabolism; menaquinone biosynthesis. Its function is as follows. Converts 2-succinyl-6-hydroxy-2,4-cyclohexadiene-1-carboxylate (SHCHC) to 2-succinylbenzoate (OSB). The chain is o-succinylbenzoate synthase from Escherichia coli O157:H7.